The sequence spans 150 residues: Ribosome maturation factor RimP (150 aa).

The protein belongs to the RimP family.

The protein resides in the cytoplasm. In terms of biological role, required for maturation of 30S ribosomal subunits. This Salmonella dublin (strain CT_02021853) protein is Ribosome maturation factor RimP.